Here is a 251-residue protein sequence, read N- to C-terminus: MRKPFIAGNWKMYKTPVEAAGFVRELIDSLKDVSGVDVAVCPPFPALWPVKEALEGSNIALGAQNMHFEKEGAFTGEVSPAMLQDIGVKYVILGHSERRAYFGETDELINQKIKAAFTWGLNPIFCVGETLEERERGITKAVVEIQVLKGLAGVTAEQAENLTIAYEPVWAIGTGKTATPDDAQEVCQFIRELLVKLFGREIADKVRIQYGGSVKPENIKELIAKPDIDGALVGGASLKVESFTAIVKGSI.

Residue 9-11 (NWK) participates in substrate binding. H95 functions as the Electrophile in the catalytic mechanism. E167 acts as the Proton acceptor in catalysis. Substrate-binding positions include G173, S213, and 234 to 235 (GG).

The protein belongs to the triosephosphate isomerase family. Homodimer.

The protein localises to the cytoplasm. The enzyme catalyses D-glyceraldehyde 3-phosphate = dihydroxyacetone phosphate. The protein operates within carbohydrate biosynthesis; gluconeogenesis. It functions in the pathway carbohydrate degradation; glycolysis; D-glyceraldehyde 3-phosphate from glycerone phosphate: step 1/1. Its function is as follows. Involved in the gluconeogenesis. Catalyzes stereospecifically the conversion of dihydroxyacetone phosphate (DHAP) to D-glyceraldehyde-3-phosphate (G3P). This Carboxydothermus hydrogenoformans (strain ATCC BAA-161 / DSM 6008 / Z-2901) protein is Triosephosphate isomerase.